Consider the following 59-residue polypeptide: Conotoxin Bu1.2 (59 aa).

A signal peptide spans 1–16 (MFTVFLLVVLATTVVS). A propeptide spanning residues 17-42 (FSTDDESDGSNEEPSADQAARSAMNR) is cleaved from the precursor. Residues 18–43 (STDDESDGSNEEPSADQAARSAMNRP) are disordered. Residues 19 to 31 (TDDESDGSNEEPS) are compositionally biased toward acidic residues. 2 disulfide bridges follow: Cys-46–Cys-52 and Cys-47–Cys-57. At Gly-58 the chain carries Glycine amide.

This sequence belongs to the conotoxin A superfamily. In terms of tissue distribution, expressed by the venom duct.

The protein localises to the secreted. This chain is Conotoxin Bu1.2, found in Conus bullatus (Bubble cone).